Here is a 101-residue protein sequence, read N- to C-terminus: MAKTSQVNRNKRREKMAARDAAKRAALKAIVNDRSLPVEDRFDATLKLAQLPRNGAKTRVRLRCELTGRARGNYRKFKLCRVALRDLASAGQIPGMVKSSW.

The disordered stretch occupies residues 1–20 (MAKTSQVNRNKRREKMAARD).

The protein belongs to the universal ribosomal protein uS14 family. Part of the 30S ribosomal subunit. Contacts proteins S3 and S10.

In terms of biological role, binds 16S rRNA, required for the assembly of 30S particles and may also be responsible for determining the conformation of the 16S rRNA at the A site. In Acidiphilium cryptum (strain JF-5), this protein is Small ribosomal subunit protein uS14.